The primary structure comprises 521 residues: Serine/threonine-protein kinase A (521 aa).

In terms of domain architecture, Protein kinase spans 15-289 (YQLVELVGSG…DVIIRAIDAI (275 aa)). ATP contacts are provided by residues 21 to 29 (VGSGAMGQV) and Lys-45. The Proton acceptor role is filled by Asp-148.

The protein belongs to the protein kinase superfamily. Ser/Thr protein kinase family. Post-translationally, autophosphorylated.

The enzyme catalyses L-seryl-[protein] + ATP = O-phospho-L-seryl-[protein] + ADP + H(+). The catalysed reaction is L-threonyl-[protein] + ATP = O-phospho-L-threonyl-[protein] + ADP + H(+). Its function is as follows. Protein kinase that regulates cellular motility via phosphorylation of membrane proteins. The protein is Serine/threonine-protein kinase A (spkA) of Synechocystis sp. (strain ATCC 27184 / PCC 6803 / Kazusa).